A 1615-amino-acid polypeptide reads, in one-letter code: Ras-responsive element-binding protein 1 (1615 aa).

A disordered region spans residues 1-44 (MMSAVMNVGKIAENGGTSQTVKSPSKSPAPNRIGRRNQETKEEK). Residues 15–28 (GGTSQTVKSPSKSP) show a composition bias toward polar residues. C2H2-type zinc fingers lie at residues 47-69 (YTCP…IRQH), 78-100 (HSCS…MLVH), and 106-128 (YKCS…MKIH). A disordered region spans residues 127–169 (IHEKDPNSTASTTPPSPLKAKRLSSKRKFSQDAEMDREERTPA). Residues 145–154 (KAKRLSSKRK) show a composition bias toward basic residues. 3 C2H2-type zinc fingers span residues 189–211 (YHCP…METH), 216–239 (LRCD…AVIH), and 297–319 (FICE…TETH). The interval 511-556 (SAQQASPGCISPSLPPPPLRLIKNSVETSSNSHLSQPGAKSSPSSQ) is disordered. The span at 535-549 (SVETSSNSHLSQPGA) shows a compositional bias: polar residues. 4 C2H2-type zinc fingers span residues 622–644 (YPCR…IRSH), 650–672 (YQCN…LRTH), 732–754 (TVCK…MRTH), and 763–788 (FECK…QHLH). Disordered regions lie at residues 1025 to 1044 (AADA…KSGN), 1058 to 1104 (DSNL…VDLE), and 1123 to 1162 (KFSP…KRNT). A compositionally biased stretch (low complexity) spans 1026 to 1036 (ADASPKAASSS). Positions 1082-1095 (TKKRGRKKGTKNKP) are enriched in basic residues. Over residues 1123 to 1132 (KFSPFLQSTD) the composition is skewed to polar residues. Residues 1170–1192 (ITCPYCPRVFSWASSLQRHMLTH) form a C2H2-type 11 zinc finger. Disordered regions lie at residues 1214 to 1269 (CEKE…KSLD) and 1313 to 1418 (LSRH…DKRK). Over residues 1242–1262 (PAEEDAEEKADEYEEGPEEDS) the composition is skewed to acidic residues. Residues 1298–1320 (HACDVCGKTFKFAGALSRHKKAH) form a C2H2-type 12 zinc finger. Basic and acidic residues-rich tracts occupy residues 1321-1339 (IRED…KSIQ) and 1388-1414 (GTER…TAKA). 2 C2H2-type zinc fingers span residues 1419–1441 (KVCT…MRSH) and 1447–1469 (YKCQ…QRIH). A compositionally biased stretch (basic residues) spans 1464–1477 (RHQRIHQKVKNTRN). Positions 1464-1585 (RHQRIHQKVK…SELERPSGFI (122 aa)) are disordered. Basic and acidic residues-rich tracts occupy residues 1478-1493 (HGKE…RCGE) and 1566-1580 (PAKD…ELER).

It belongs to the krueppel C2H2-type zinc-finger protein family. In terms of tissue distribution, broadly expressed, except in brain.

It is found in the nucleus. Its function is as follows. Transcription factor that binds specifically to the RAS-responsive elements (RRE) of gene promoters. This Gallus gallus (Chicken) protein is Ras-responsive element-binding protein 1 (RREB1).